A 407-amino-acid polypeptide reads, in one-letter code: Probable protein S-acyltransferase 9 (407 aa).

Helical transmembrane passes span 28-48 (WSIP…SVFV) and 62-82 (GHVF…LLFL). The DHHC domain occupies 136–179 (KYCDTCMLYRPPRCSHCSICNNCVERFDHHCPWRNYRYFFMFVS). Cys-166 functions as the S-palmitoyl cysteine intermediate in the catalytic mechanism. The next 2 membrane-spanning stretches (helical) occupy residues 174-194 (FFMF…MSAL) and 217-237 (AVML…LTGF). Residues 300–407 (LATTWERPEE…RSYAAAEEGR (108 aa)) are disordered. Basic and acidic residues predominate over residues 346 to 356 (DTAHHKIDIDQ).

Belongs to the DHHC palmitoyltransferase family. In terms of tissue distribution, mainly expressed in seeds.

It localises to the cell membrane. The catalysed reaction is L-cysteinyl-[protein] + hexadecanoyl-CoA = S-hexadecanoyl-L-cysteinyl-[protein] + CoA. Its function is as follows. Palmitoyl acyltransferase. The polypeptide is Probable protein S-acyltransferase 9 (PAT09) (Arabidopsis thaliana (Mouse-ear cress)).